We begin with the raw amino-acid sequence, 412 residues long: MRDFIKHLKDRGILEDFSHGLDSVESPISAYLGFDPTAASLHIGHWIGICFLRRMASFGITPVALVGSATGMIGDPSGKSIERTLLESNEVAHNSKKLSECLSHYLPGVQIVNNMEWFQGTTVIDFLRDVGKHFRLGTMLGKDTIKQRIQSEEGISYTEFSYILLQSYDFAHLFEKHGIALQCGGSDQWGNITSGIDYIRRKGLGQAYGLTYPLLTNSQGKKIGKTESGTIWLDPTLTSPYELYQYFLRLPDAEVPKIARTLTLLSNEEIFDLDKKFLSDPIAVKKFVTETIVTSIHGEDGLKKAQMVTQSMHPGKVSSISEKDFQDLISMGQGISLDRVQTLGKRWIDLFVGVGFCNSKGEARRLIEQKGLYVNSEPIADEHSVFEERQVCYDQYVLLAQGKKKKLVLHLI.

Position 31 (Y31) interacts with L-tyrosine. The 'HIGH' region signature appears at 36–45; sequence PTAASLHIGH. L-tyrosine-binding residues include Y162 and Q166. Residues 222-226 carry the 'KMSKS' region motif; sequence KIGKT. K225 serves as a coordination point for ATP. The region spanning 345–412 is the S4 RNA-binding domain; sequence KRWIDLFVGV…KKKKLVLHLI (68 aa).

This sequence belongs to the class-I aminoacyl-tRNA synthetase family. TyrS type 1 subfamily. In terms of assembly, homodimer.

It localises to the cytoplasm. The enzyme catalyses tRNA(Tyr) + L-tyrosine + ATP = L-tyrosyl-tRNA(Tyr) + AMP + diphosphate + H(+). Functionally, catalyzes the attachment of tyrosine to tRNA(Tyr) in a two-step reaction: tyrosine is first activated by ATP to form Tyr-AMP and then transferred to the acceptor end of tRNA(Tyr). In Chlamydia caviae (strain ATCC VR-813 / DSM 19441 / 03DC25 / GPIC) (Chlamydophila caviae), this protein is Tyrosine--tRNA ligase.